The primary structure comprises 463 residues: uncharacterized protein (463 aa).

This sequence belongs to the mycobacterial PPE family.

This is an uncharacterized protein from Mycobacterium tuberculosis (strain CDC 1551 / Oshkosh).